The chain runs to 619 residues: Zinc finger protein 131 (619 aa).

The BTB domain maps to 34 to 98 (TDITLIVDGH…TYTAKLMIQG (65 aa)). The short motif at 137–148 (TGKNEAKKRKIA) is the Nuclear localization signal 1 element. Ser231 is subject to Phosphoserine. 3 C2H2-type zinc fingers span residues 261-283 (FHCEKCNRSFKLFYHFKEHMKSH), 288-311 (FKCEICNKRYLRESAWKQHLNCYH), and 328-350 (HICQYCDKQFDHFGHFKEHLRKH). Residues Lys289 and Lys295 each participate in a glycyl lysine isopeptide (Lys-Gly) (interchain with G-Cter in SUMO2) cross-link. The short motif at 317–328 (VSKKQRTGKKIH) is the Nuclear localization signal 2 element. Residues 356–381 (FECSNCHERFARNSTLKCHLTACQTG) form a C2H2-type 4; degenerate zinc finger. 2 consecutive C2H2-type zinc fingers follow at residues 392 to 414 (YECQVCNSVFNSWDQFKDHLVIH) and 420 to 443 (NHCTLCDLWFMQGNELRRHLSDAH). Composition is skewed to basic and acidic residues over residues 574 to 587 (QEEREPNHADAAME) and 595 to 612 (LETKPSEYSQARKTENDR). The segment at 574-619 (QEEREPNHADAAMEEHEDAEGLETKPSEYSQARKTENDRTSLPVLE) is disordered. A Glycyl lysine isopeptide (Lys-Gly) (interchain with G-Cter in SUMO) cross-link involves residue Lys598.

The protein belongs to the krueppel C2H2-type zinc-finger protein family. Monosumoylated at Lys-598 by CBX4 and UHRF2. Sumoylation may potentiate ZNF131 inhibition of estrogen signaling. Sumoylation does not interfere with ubiquitination. In terms of processing, ubiquitinated. Ubiquitously expressed. Predominant expression is found in the developing central nervous system with strongest signals in the forebrain, midbrain, and hindbrain areas and in the neural tube.

Its subcellular location is the nucleus. May be involved in transcriptional regulation as a repressor of ESR1/ER-alpha signaling. Plays a role during development and organogenesis as well as in the function of the adult central nervous system. This Mus musculus (Mouse) protein is Zinc finger protein 131 (Znf131).